Consider the following 24-residue polypeptide: Tryptophanase operon leader peptide (24 aa).

This Escherichia coli O157:H7 protein is Tryptophanase operon leader peptide (tnaL).